A 400-amino-acid polypeptide reads, in one-letter code: Homoserine O-acetyltransferase (400 aa).

The AB hydrolase-1 domain maps to 64–374; it reads NAILVCHALT…DKGHDAFLLD (311 aa). Ser169 (nucleophile) is an active-site residue. Arg239 is a substrate binding site. Residues Asp335 and His368 contribute to the active site. Asp369 provides a ligand contact to substrate.

This sequence belongs to the AB hydrolase superfamily. MetX family. As to quaternary structure, homodimer.

The protein localises to the cytoplasm. It catalyses the reaction L-homoserine + acetyl-CoA = O-acetyl-L-homoserine + CoA. Its pathway is amino-acid biosynthesis; L-methionine biosynthesis via de novo pathway; O-acetyl-L-homoserine from L-homoserine: step 1/1. In terms of biological role, transfers an acetyl group from acetyl-CoA to L-homoserine, forming acetyl-L-homoserine. The polypeptide is Homoserine O-acetyltransferase (Rhodopseudomonas palustris (strain ATCC BAA-98 / CGA009)).